The sequence spans 308 residues: tRNA dimethylallyltransferase (308 aa).

14-21 (GPTASGKT) provides a ligand contact to ATP. 16–21 (TASGKT) lines the substrate pocket. 3 interaction with substrate tRNA regions span residues 39 to 42 (DSAL), 163 to 167 (QRLSR), and 244 to 249 (RCVGYR).

Belongs to the IPP transferase family. In terms of assembly, monomer. Mg(2+) is required as a cofactor.

The enzyme catalyses adenosine(37) in tRNA + dimethylallyl diphosphate = N(6)-dimethylallyladenosine(37) in tRNA + diphosphate. Catalyzes the transfer of a dimethylallyl group onto the adenine at position 37 in tRNAs that read codons beginning with uridine, leading to the formation of N6-(dimethylallyl)adenosine (i(6)A). The chain is tRNA dimethylallyltransferase from Shewanella loihica (strain ATCC BAA-1088 / PV-4).